Here is a 454-residue protein sequence, read N- to C-terminus: Bifunctional protein GlmU (454 aa).

A pyrophosphorylase region spans residues 1–226 (MSLEIVILAA…AMEVQGVNDR (226 aa)). UDP-N-acetyl-alpha-D-glucosamine is bound by residues 8 to 11 (LAAG), Lys22, Gln73, 78 to 79 (GT), 99 to 101 (YGD), Gly136, Glu151, Asn166, and Asn224. A Mg(2+)-binding site is contributed by Asp101. Asn224 serves as a coordination point for Mg(2+). Positions 227–247 (MQQAQLERHYQRLRAEELMRQ) are linker. An N-acetyltransferase region spans residues 248 to 454 (GVTLLDPQRL…NWKRPEKIRK (207 aa)). Positions 330 and 348 each coordinate UDP-N-acetyl-alpha-D-glucosamine. His360 (proton acceptor) is an active-site residue. The UDP-N-acetyl-alpha-D-glucosamine site is built by Tyr363 and Asn374. Acetyl-CoA contacts are provided by residues Ala377, 383–384 (NY), Ser402, Ala420, and Arg437.

The protein in the N-terminal section; belongs to the N-acetylglucosamine-1-phosphate uridyltransferase family. In the C-terminal section; belongs to the transferase hexapeptide repeat family. Homotrimer. It depends on Mg(2+) as a cofactor.

Its subcellular location is the cytoplasm. The catalysed reaction is alpha-D-glucosamine 1-phosphate + acetyl-CoA = N-acetyl-alpha-D-glucosamine 1-phosphate + CoA + H(+). The enzyme catalyses N-acetyl-alpha-D-glucosamine 1-phosphate + UTP + H(+) = UDP-N-acetyl-alpha-D-glucosamine + diphosphate. Its pathway is nucleotide-sugar biosynthesis; UDP-N-acetyl-alpha-D-glucosamine biosynthesis; N-acetyl-alpha-D-glucosamine 1-phosphate from alpha-D-glucosamine 6-phosphate (route II): step 2/2. It functions in the pathway nucleotide-sugar biosynthesis; UDP-N-acetyl-alpha-D-glucosamine biosynthesis; UDP-N-acetyl-alpha-D-glucosamine from N-acetyl-alpha-D-glucosamine 1-phosphate: step 1/1. It participates in bacterial outer membrane biogenesis; LPS lipid A biosynthesis. Its function is as follows. Catalyzes the last two sequential reactions in the de novo biosynthetic pathway for UDP-N-acetylglucosamine (UDP-GlcNAc). The C-terminal domain catalyzes the transfer of acetyl group from acetyl coenzyme A to glucosamine-1-phosphate (GlcN-1-P) to produce N-acetylglucosamine-1-phosphate (GlcNAc-1-P), which is converted into UDP-GlcNAc by the transfer of uridine 5-monophosphate (from uridine 5-triphosphate), a reaction catalyzed by the N-terminal domain. The polypeptide is Bifunctional protein GlmU (Pseudomonas paraeruginosa (strain DSM 24068 / PA7) (Pseudomonas aeruginosa (strain PA7))).